An 80-amino-acid polypeptide reads, in one-letter code: FXYD domain-containing ion transport regulator 7 (80 aa).

The Extracellular portion of the chain corresponds to 1–22; sequence MATPTQSPTNVPEETDPFFYDY. 3 O-linked (GlcNAc) threonine glycosylation sites follow: Thr-3, Thr-5, and Thr-9. Residues 23–45 form a helical membrane-spanning segment; that stretch reads ATVQTVGMTLATIMFVLGIIIIL. The Cytoplasmic segment spans residues 46–80; it reads SKKVKCRKADSRSESPTCKSCKSELPSSAPGGGGV. The tract at residues 55–80 is disordered; the sequence is DSRSESPTCKSCKSELPSSAPGGGGV. Residue Ser-73 is modified to Phosphoserine.

This sequence belongs to the FXYD family. As to quaternary structure, regulatory subunit of the sodium/potassium-transporting ATPase which is composed of a catalytic alpha subunit, a non-catalytic beta subunit and an additional regulatory subunit. The regulatory subunit, a member of the FXYD protein family, modulates the enzymatic activity in a tissue- and isoform-specific way by changing affinities of the Na+/K+-ATPase toward Na(+), K(+) or ATP. In terms of processing, O-glycosylated; required for stabilization and translocation to the plasma membrane.

The protein localises to the cell membrane. Functionally, associates with and regulates the activity of the sodium/potassium-transporting ATPase (NKA) which catalyzes the hydrolysis of ATP coupled with the exchange of Na(+) and K(+) ions across the plasma membrane. Reduces the apparent affinity for external K(+), an effect that depends on the presence of external Na(+) and voltage. Increases the apparent affinity for intracellular Na(+). The polypeptide is FXYD domain-containing ion transport regulator 7 (Fxyd7) (Mus musculus (Mouse)).